A 287-amino-acid polypeptide reads, in one-letter code: Pyridoxal kinase PdxY (287 aa).

Residues Ser-10 and 45 to 46 (TQ) each bind substrate. Residues Asp-112, Ala-144, Glu-149, Lys-182, and 209–212 (RPLV) contribute to the ATP site. Asp-224 contacts substrate.

Belongs to the pyridoxine kinase family. PdxY subfamily. In terms of assembly, homodimer. Mg(2+) serves as cofactor.

The catalysed reaction is pyridoxal + ATP = pyridoxal 5'-phosphate + ADP + H(+). The protein operates within cofactor metabolism; pyridoxal 5'-phosphate salvage; pyridoxal 5'-phosphate from pyridoxal: step 1/1. Functionally, pyridoxal kinase involved in the salvage pathway of pyridoxal 5'-phosphate (PLP). Catalyzes the phosphorylation of pyridoxal to PLP. In Escherichia coli O157:H7, this protein is Pyridoxal kinase PdxY.